A 146-amino-acid polypeptide reads, in one-letter code: Large ribosomal subunit protein uL15 (146 aa).

The tract at residues Met1 to Glu51 is disordered. Composition is skewed to gly residues over residues Thr23 to Gln35 and Ser42 to Glu51.

This sequence belongs to the universal ribosomal protein uL15 family. As to quaternary structure, part of the 50S ribosomal subunit.

Functionally, binds to the 23S rRNA. This Streptococcus gordonii (strain Challis / ATCC 35105 / BCRC 15272 / CH1 / DL1 / V288) protein is Large ribosomal subunit protein uL15.